A 372-amino-acid polypeptide reads, in one-letter code: Alanine dehydrogenase 2 (372 aa).

The active site involves His-95. An NAD(+)-binding site is contributed by Lys-169–Asn-199.

This sequence belongs to the AlaDH/PNT family.

It carries out the reaction L-alanine + NAD(+) + H2O = pyruvate + NH4(+) + NADH + H(+). It functions in the pathway amino-acid degradation; L-alanine degradation via dehydrogenase pathway; NH(3) and pyruvate from L-alanine: step 1/1. Its function is as follows. May play a role in cell wall synthesis as L-alanine is an important constituent of the peptidoglycan layer. The chain is Alanine dehydrogenase 2 (ald2) from Staphylococcus aureus (strain Mu50 / ATCC 700699).